We begin with the raw amino-acid sequence, 125 residues long: Ribosome-binding factor A (125 aa).

The protein belongs to the RbfA family. In terms of assembly, monomer. Binds 30S ribosomal subunits, but not 50S ribosomal subunits or 70S ribosomes.

The protein resides in the cytoplasm. Functionally, one of several proteins that assist in the late maturation steps of the functional core of the 30S ribosomal subunit. Associates with free 30S ribosomal subunits (but not with 30S subunits that are part of 70S ribosomes or polysomes). Required for efficient processing of 16S rRNA. May interact with the 5'-terminal helix region of 16S rRNA. The chain is Ribosome-binding factor A from Chloroherpeton thalassium (strain ATCC 35110 / GB-78).